A 541-amino-acid polypeptide reads, in one-letter code: MADSPLEQGWNVVTWALSGSYDEDRPVLIDADQPNRSLSKKQAIDLVARLSGSFQPGSTVCVHLYNDIIYPVLVLAILASHCEWTGTNPAYTSAELSHHFAQSETRYVITDQAYVDVVHQAITASGQNIEIIIFSDIVTDKPGENDLRWRCNKYDLATLHSLLTHGDESTLRRRLQGIPNHSPATAMSTSGTTGLPKMVQRSHRSLVLETGGTQDHNSAKPFQVRRLYCTPIFHAFSFPEMVINTIRLGFPSFYMRRFDESFANKVHEFGITETMAAPAMLLKIIQWTEKHEEQRFKLQGLRTILCAGAALASRLRASFLQLFDDASVRIVQVWGMTEGGWFATFWYPEHDDTGSIGRPLPTCQIRVSEVPHAELPDGRQVGELLVKGPQLLTTYKGHPDATKQAFNDGWLRTGDIGYCANGKVYIIDRAKDIIKVNGWTISPAELEAVLHQMPVIVDAAALSYGTGTKEHVAMFVVAKEPSMLIADIKHHLLQQVARFKVATCEIHLVDSLPRNSSGKILRGVLRHQLQAHYGNGDHGID.

Position 186–197 (186–197) interacts with AMP; the sequence is AMSTSGTTGLPK. Positions 445–519 are AMP-binding; it reads ELEAVLHQMP…DSLPRNSSGK (75 aa).

The protein belongs to the ATP-dependent AMP-binding enzyme family.

Its pathway is secondary metabolite biosynthesis. Functionally, acyl-CoA ligase; part of the gene cluster that mediates the biosynthesis of squalestatin S1 (SQS1, also known as zaragozic acid A), a heavily oxidized fungal polyketide that offers potent cholesterol lowering activity by targeting squalene synthase (SS). SQS1 is composed of a 2,8-dioxobicyclic[3.2.1]octane-3,4,5-tricarboxyclic acid core that is connected to two lipophilic polyketide arms. These initial steps feature the priming of an unusual benzoic acid starter unit onto the highly reducing polyketide synthase pks2, followed by oxaloacetate extension and product release to generate a tricarboxylic acid containing product. The phenylalanine ammonia lyase (PAL) M7 and the acyl-CoA ligase M9 are involved in transforming phenylalanine into benzoyl-CoA. The citrate synthase-like protein R3 is involved in connecting the C-alpha-carbons of the hexaketide chain and oxaloacetate to afford the tricarboxylic acid unit. The potential hydrolytic enzymes, M8 and M10, are in close proximity to pks2 and may participate in product release. On the other side, the tetraketide arm is synthesized by a the squalestatin tetraketide synthase pks1 and enzymatically esterified to the core in the last biosynthetic step, by the acetyltransferase M4. The biosynthesis of the tetraketide must involve 3 rounds of chain extension. After the first and second rounds methyl-transfer occurs, and in all rounds of extension the ketoreductase and dehydratase are active. The enoyl reductase and C-MeT of pks1 are not active in the final round of extension. The acetyltransferase M4 appears to have a broad substrate selectivity for its acyl CoA substrate, allowing the in vitro synthesis of novel squalestatins. The biosynthesis of SQS1 requires several oxidative steps likely performed by oxidoreductases M1, R1 and R2. Finally, in support of the identification of the cluster as being responsible for SQS1 production, the cluster contains a gene encoding a putative squalene synthase (SS) R6, suggesting a likely mechanism for self-resistance. In Phoma sp. (strain ATCC 20986 / MF5453), this protein is Acyl-CoA ligase M9.